The primary structure comprises 565 residues: Anaphase-promoting complex subunit 7 (565 aa).

TPR repeat units follow at residues Glu101–Thr134, Leu169–Leu202, Ser203–Asn236, Val237–Leu270, Val339–Arg372, Leu373–Asn406, Ala407–Tyr441, Ile442–Asp474, Cys475–Asp508, and Gln509–Glu531. N6-acetyllysine is present on Lys229. Over residues Glu513 to Ser523 the composition is skewed to basic and acidic residues. A disordered region spans residues Glu513–Gln565. The span at Thr528–Asp549 shows a compositional bias: acidic residues.

This sequence belongs to the APC7 family. In terms of assembly, V-shaped homodimer. The mammalian APC/C is composed at least of 14 distinct subunits ANAPC1, ANAPC2, CDC27/APC3, ANAPC4, ANAPC5, CDC16/APC6, ANAPC7, CDC23/APC8, ANAPC10, ANAPC11, CDC26/APC12, ANAPC13, ANAPC15 and ANAPC16 that assemble into a complex of at least 19 chains with a combined molecular mass of around 1.2 MDa; APC/C interacts with FZR1 and FBXO5.

The protein localises to the cytoplasm. It localises to the cytoskeleton. The protein resides in the nucleus. It is found in the spindle. It functions in the pathway protein modification; protein ubiquitination. Component of the anaphase promoting complex/cyclosome (APC/C), a cell cycle-regulated E3 ubiquitin ligase that controls progression through mitosis and the G1 phase of the cell cycle. The APC/C complex acts by mediating ubiquitination and subsequent degradation of target proteins: it mainly mediates the formation of 'Lys-11'-linked polyubiquitin chains and, to a lower extent, the formation of 'Lys-48'- and 'Lys-63'-linked polyubiquitin chains. The APC/C complex catalyzes assembly of branched 'Lys-11'-/'Lys-48'-linked branched ubiquitin chains on target proteins. APC7 is not required for the assembly of the APC/C complex, but has an enzyme-substrate adapter activity mediating the processive ubiquitination of specific substrates. Involved in brain development through the specific ubiquitination and clearance of MKI67 from constitutive heterochromatin after neuronal progenitors exit mitosis. This chain is Anaphase-promoting complex subunit 7, found in Homo sapiens (Human).